The following is a 271-amino-acid chain: Regulatory protein RecX (271 aa).

The protein belongs to the RecX family.

The protein resides in the cytoplasm. Its function is as follows. Modulates RecA activity. In Lactobacillus delbrueckii subsp. bulgaricus (strain ATCC 11842 / DSM 20081 / BCRC 10696 / JCM 1002 / NBRC 13953 / NCIMB 11778 / NCTC 12712 / WDCM 00102 / Lb 14), this protein is Regulatory protein RecX.